The sequence spans 431 residues: Enolase (431 aa).

(2R)-2-phosphoglycerate is bound at residue Gln-167. The active-site Proton donor is Glu-209. Asp-246, Glu-289, and Asp-316 together coordinate Mg(2+). (2R)-2-phosphoglycerate contacts are provided by Lys-341, Arg-370, Ser-371, and Lys-392. Residue Lys-341 is the Proton acceptor of the active site.

It belongs to the enolase family. Component of the RNA degradosome, a multiprotein complex involved in RNA processing and mRNA degradation. Mg(2+) serves as cofactor.

It is found in the cytoplasm. It localises to the secreted. The protein localises to the cell surface. It catalyses the reaction (2R)-2-phosphoglycerate = phosphoenolpyruvate + H2O. Its pathway is carbohydrate degradation; glycolysis; pyruvate from D-glyceraldehyde 3-phosphate: step 4/5. In terms of biological role, catalyzes the reversible conversion of 2-phosphoglycerate (2-PG) into phosphoenolpyruvate (PEP). It is essential for the degradation of carbohydrates via glycolysis. In Shewanella denitrificans (strain OS217 / ATCC BAA-1090 / DSM 15013), this protein is Enolase.